Consider the following 131-residue polypeptide: Profilin-3 (131 aa).

It belongs to the profilin family. In terms of assembly, occurs in many kinds of cells as a complex with monomeric actin in a 1:1 ratio.

It is found in the cytoplasm. The protein resides in the cytoskeleton. Its function is as follows. Binds to actin and affects the structure of the cytoskeleton. At high concentrations, profilin prevents the polymerization of actin, whereas it enhances it at low concentrations. By binding to PIP2, it inhibits the formation of IP3 and DG. The sequence is that of Profilin-3 (PRO3) from Triticum aestivum (Wheat).